Reading from the N-terminus, the 508-residue chain is Ribose import ATP-binding protein RbsA 2 (508 aa).

2 consecutive ABC transporter domains span residues 6–241 and 254–499; these read LTIH…VGRE and ERSG…SGMG. ATP is bound at residue 38-45; that stretch reads GENGAGKS.

This sequence belongs to the ABC transporter superfamily. Ribose importer (TC 3.A.1.2.1) family. The complex is composed of an ATP-binding protein (RbsA), two transmembrane proteins (RbsC) and a solute-binding protein (RbsB).

The protein localises to the cell inner membrane. It catalyses the reaction D-ribose(out) + ATP + H2O = D-ribose(in) + ADP + phosphate + H(+). Its function is as follows. Part of the ABC transporter complex RbsABC involved in ribose import. Responsible for energy coupling to the transport system. The polypeptide is Ribose import ATP-binding protein RbsA 2 (Rhizobium etli (strain ATCC 51251 / DSM 11541 / JCM 21823 / NBRC 15573 / CFN 42)).